Consider the following 363-residue polypeptide: Suberization-associated anionic peroxidase (363 aa).

Residues 1 to 20 (MGFRLSHLSLALSFVALALA) form the signal peptide. N36 is a glycosylation site (N-linked (GlcNAc...) asparagine). Cystine bridges form between C80–C159 and C111–C116. The Proton acceptor role is filled by H109. D110, V113, G115, and D117 together coordinate Ca(2+). N-linked (GlcNAc...) asparagine glycosylation is found at N126, N161, and N199. 2 disulfides stabilise this stretch: C166–C352 and C245–C264. P208 is a substrate binding site. Residues N213 and N225 are each glycosylated (N-linked (GlcNAc...) asparagine). H238 provides a ligand contact to heme b. Residue T239 participates in Ca(2+) binding. An N-linked (GlcNAc...) asparagine glycan is attached at N263. Ca(2+) contacts are provided by D277, T279, and D284.

Belongs to the peroxidase family. Classical plant (class III) peroxidase subfamily. Ca(2+) serves as cofactor. Requires heme b as cofactor.

The protein localises to the secreted. It carries out the reaction 2 a phenolic donor + H2O2 = 2 a phenolic radical donor + 2 H2O. Removal of H(2)O(2), oxidation of toxic reductants, biosynthesis and degradation of lignin, suberization, auxin catabolism, response to environmental stresses such as wounding, pathogen attack and oxidative stress. These functions might be dependent on each isozyme/isoform in each plant tissue. In terms of biological role, suggested to catalyze the deposition of the aromatic residues of suberin on the cell wall and thus play a role in cell-suberization. The protein is Suberization-associated anionic peroxidase of Solanum tuberosum (Potato).